Here is a 465-residue protein sequence, read N- to C-terminus: Alpha-2A adrenergic receptor (465 aa).

At 1–48 (MFRQEQPLAEGSFAPMGSLQPEAGNASWNGTEAPGGGARATPYSLQVT) the chain is on the extracellular side. Residues Asn-25 and Asn-29 are each glycosylated (N-linked (GlcNAc...) asparagine). The chain crosses the membrane as a helical span at residues 49–74 (LTLVCLAGLLMLFTVFGNVLVIIAVF). Residues 75-85 (TSRALKAPQNL) lie on the Cytoplasmic side of the membrane. The chain crosses the membrane as a helical span at residues 86–111 (FLVSLASADILVATLVIPFSLANEVM). At 112 to 121 (GYWYFGKAWC) the chain is on the extracellular side. The cysteines at positions 121 and 203 are disulfide-linked. The helical transmembrane segment at 122–144 (EIYLALDVLFCTSSIVHLCAISL) threads the bilayer. Over 145–164 (DRYWSITQAIEYNLKRTPRR) the chain is Cytoplasmic. A helical transmembrane segment spans residues 165-188 (IKAIIVTVWVISAVISFPPLISIE). At 189–207 (KKAGGGGQQPAEPRCEIND) the chain is on the extracellular side. The helical transmembrane segment at 208–232 (QKWYVISSCIGSFFAPCLIMILVYV) threads the bilayer. At 233-389 (RIYQIAKRRT…RQNREKRFTF (157 aa)) the chain is on the cytoplasmic side. Residues 242 to 377 (TRVPPSRRGP…RGGVAKASRW (136 aa)) form a disordered region. Positions 313–330 (SSEHAERPPGPRRSERGP) are enriched in basic and acidic residues. Ser-346 carries the post-translational modification Phosphoserine. At Arg-368 the chain carries Omega-N-methylarginine. Residues 390-414 (VLAVVIGVFVVCWFPFFFTYTLTAV) form a helical membrane-spanning segment. The Extracellular segment spans residues 415–424 (GCSVPPTLFK). Residues 425-445 (FFFWFGYCNSSLNPVIYTIFN) form a helical membrane-spanning segment. Over 446-465 (HDFRRAFKKILCRGDRKRIV) the chain is Cytoplasmic. Cys-457 carries S-palmitoyl cysteine lipidation.

Belongs to the G-protein coupled receptor 1 family. Adrenergic receptor subfamily. ADRA2A sub-subfamily.

It localises to the cell membrane. Functionally, alpha-2 adrenergic receptors mediate the catecholamine-induced inhibition of adenylate cyclase through the action of G proteins. The sequence is that of Alpha-2A adrenergic receptor from Sus scrofa (Pig).